We begin with the raw amino-acid sequence, 269 residues long: 4-hydroxy-tetrahydrodipicolinate reductase (269 aa).

NAD(+) contacts are provided by residues 10-15 and Glu36; that span reads GSSGRM. An NADP(+)-binding site is contributed by Arg37. NAD(+) contacts are provided by residues 99-101 and 123-126; these read GTT and APNM. Residue His156 is the Proton donor/acceptor of the active site. (S)-2,3,4,5-tetrahydrodipicolinate is bound at residue His157. Lys160 (proton donor) is an active-site residue. 166–167 is a binding site for (S)-2,3,4,5-tetrahydrodipicolinate; that stretch reads GT.

The protein belongs to the DapB family.

It localises to the cytoplasm. It catalyses the reaction (S)-2,3,4,5-tetrahydrodipicolinate + NAD(+) + H2O = (2S,4S)-4-hydroxy-2,3,4,5-tetrahydrodipicolinate + NADH + H(+). The catalysed reaction is (S)-2,3,4,5-tetrahydrodipicolinate + NADP(+) + H2O = (2S,4S)-4-hydroxy-2,3,4,5-tetrahydrodipicolinate + NADPH + H(+). The protein operates within amino-acid biosynthesis; L-lysine biosynthesis via DAP pathway; (S)-tetrahydrodipicolinate from L-aspartate: step 4/4. In terms of biological role, catalyzes the conversion of 4-hydroxy-tetrahydrodipicolinate (HTPA) to tetrahydrodipicolinate. This chain is 4-hydroxy-tetrahydrodipicolinate reductase, found in Nitrosospira multiformis (strain ATCC 25196 / NCIMB 11849 / C 71).